A 208-amino-acid polypeptide reads, in one-letter code: Translation initiation factor IF-3 (208 aa).

It belongs to the IF-3 family. Monomer.

The protein localises to the cytoplasm. Its function is as follows. IF-3 binds to the 30S ribosomal subunit and shifts the equilibrium between 70S ribosomes and their 50S and 30S subunits in favor of the free subunits, thus enhancing the availability of 30S subunits on which protein synthesis initiation begins. The sequence is that of Translation initiation factor IF-3 from Parabacteroides distasonis (strain ATCC 8503 / DSM 20701 / CIP 104284 / JCM 5825 / NCTC 11152).